Reading from the N-terminus, the 248-residue chain is Adenosylcobinamide-GDP ribazoletransferase (248 aa).

The next 7 helical transmembrane spans lie at 24-44 (EINLKKGSALLPFVGVIIGAW), 70-90 (VIITGGFHVDALADTADGLFS), 106-126 (VGANGVIAICFYFLFYGALFL), 134-154 (ICWLFFVLPIVAKGVTMLLFA), 168-188 (IFLGVPWWPIVIAQVIVLAVL), 189-209 (GLFFSYVGVIAYVGVILFTII), and 228-248 (AGGQMGQLICLFCLVLLWGLV).

It belongs to the CobS family. The cofactor is Mg(2+).

It is found in the cell membrane. It carries out the reaction alpha-ribazole + adenosylcob(III)inamide-GDP = adenosylcob(III)alamin + GMP + H(+). It catalyses the reaction alpha-ribazole 5'-phosphate + adenosylcob(III)inamide-GDP = adenosylcob(III)alamin 5'-phosphate + GMP + H(+). It functions in the pathway cofactor biosynthesis; adenosylcobalamin biosynthesis; adenosylcobalamin from cob(II)yrinate a,c-diamide: step 7/7. In terms of biological role, joins adenosylcobinamide-GDP and alpha-ribazole to generate adenosylcobalamin (Ado-cobalamin). Also synthesizes adenosylcobalamin 5'-phosphate from adenosylcobinamide-GDP and alpha-ribazole 5'-phosphate. The sequence is that of Adenosylcobinamide-GDP ribazoletransferase from Listeria monocytogenes serovar 1/2a (strain ATCC BAA-679 / EGD-e).